We begin with the raw amino-acid sequence, 638 residues long: 3D-(3,5/4)-trihydroxycyclohexane-1,2-dione hydrolase (638 aa).

Glu-67 lines the thiamine diphosphate pocket. Residues Ser-442–Gly-523 form a thiamine pyrophosphate binding region. Residues Asp-494 and Asn-521 each coordinate Mg(2+).

The protein belongs to the TPP enzyme family. Mg(2+) is required as a cofactor. Requires thiamine diphosphate as cofactor.

The enzyme catalyses 3D-3,5/4-trihydroxycyclohexane-1,2-dione + H2O = 5-deoxy-D-glucuronate + H(+). Its pathway is polyol metabolism; myo-inositol degradation into acetyl-CoA; acetyl-CoA from myo-inositol: step 3/7. Involved in the cleavage of the C1-C2 bond of 3D-(3,5/4)-trihydroxycyclohexane-1,2-dione (THcHDO) to yield 5-deoxy-glucuronate (5DG). The chain is 3D-(3,5/4)-trihydroxycyclohexane-1,2-dione hydrolase from Listeria innocua serovar 6a (strain ATCC BAA-680 / CLIP 11262).